The primary structure comprises 541 residues: Chloride channel CLIC-like protein 1 (541 aa).

An N-terminal signal peptide occupies residues 1-18 (MLCSLLLCGCLLLITGYA). Residues 19–184 (HDDDWIDPTD…EDYFGVDPYN (166 aa)) lie on the Lumenal side of the membrane. A helical membrane pass occupies residues 185 to 205 (VFMVLLCLLCIVALVATELWT). At 206 to 217 (YVRWHTQLKRVC) the chain is on the cytoplasmic side. A helical membrane pass occupies residues 218-238 (IISFLVSLGWNWIYLYKVAFA). Residues 239–329 (QHQANVAKMA…GEFIKALMKE (91 aa)) lie on the Lumenal side of the membrane. Residues 330–350 (IPVLLQIPVLVILALAVLGFC) form a helical membrane-spanning segment. Residues 351–541 (YGAGQSVPML…GTDPVSSPCG (191 aa)) lie on the Cytoplasmic side of the membrane. A disordered region spans residues 362 to 381 (HFRGPEREPPRALEPDDRRR). Residues 364–381 (RGPEREPPRALEPDDRRR) are compositionally biased toward basic and acidic residues. Phosphoserine occurs at positions 434 and 438. T482 bears the Phosphothreonine mark. S504 bears the Phosphoserine mark. A compositionally biased stretch (basic and acidic residues) spans 511–522 (QLKTDSECRPHS). The interval 511-541 (QLKTDSECRPHSTEAAAAAARGTDPVSSPCG) is disordered.

The protein belongs to the chloride channel MCLC family. In terms of assembly, homomultimers. Interacts with mitochondrial protein PIGBOS1 (via C-terminus); the interaction occurs at the mitochondria-associated endoplasmic reticulum (ER) membrane, a zone of contact between the ER and mitochondrial membranes, but does not appear to play a role in ER-mitochondria tethering and is not affected by ER stress. Interacts with CALR. In terms of tissue distribution, expressed in testis (spermatocytes), liver and lung (at protein level). Expressed in spleen, liver, testis, kidney, heart, brain and lung.

The protein resides in the endoplasmic reticulum membrane. It catalyses the reaction chloride(in) = chloride(out). The catalysed reaction is bromide(in) = bromide(out). It carries out the reaction nitrate(in) = nitrate(out). The enzyme catalyses fluoride(in) = fluoride(out). Its function is as follows. Anion-selective channel with Ca(2+)-dependent and voltage-independent gating. Permeable to small monovalent anions with selectivity for bromide &gt; chloride &gt; nitrate &gt; fluoride. Operates in the endoplasmic reticulum (ER) membrane where it mediates chloride efflux to compensate for the loss of positive charges from the ER lumen upon Ca(2+) release. Contributes to the maintenance of ER Ca(2+) pools and activation of unfolded protein response to prevent accumulation of misfolded proteins in the ER lumen. Particularly involved in ER homeostasis mechanisms underlying motor neurons and retinal photoreceptors survival. This chain is Chloride channel CLIC-like protein 1, found in Rattus norvegicus (Rat).